Reading from the N-terminus, the 457-residue chain is Multidrug resistance protein MdtK (457 aa).

The next 12 membrane-spanning stretches (helical) occupy residues 11–31 (LLAL…MGFV), 53–73 (IWLP…PVIA), 93–113 (WLAG…GYII), 127–147 (AVGY…FQVA), 160–180 (GMVM…IFIY), 188–208 (LGGI…FIAM), 243–263 (LPIA…ALLV), 276–296 (IALN…AAVT), 314–334 (AART…IFTV), 350–370 (VVAL…SDSI), 387–407 (IFFI…YILA), and 418–438 (PAGF…LMML).

It belongs to the multi antimicrobial extrusion (MATE) (TC 2.A.66.1) family. MdtK subfamily.

Its subcellular location is the cell inner membrane. In terms of biological role, multidrug efflux pump that functions probably as a Na(+)/drug antiporter. The sequence is that of Multidrug resistance protein MdtK from Salmonella enteritidis PT4 (strain P125109).